The chain runs to 101 residues: MPSQLRVAVLAAFLLSAVLCEGMVVTKLVSELRCQCIKIHTTPFHPKFIKELKVIESGPRCANSEIIVKLSDNRQLCLDPKKKWVQDVVSMFLKRTESQDS.

Positions 1–22 (MPSQLRVAVLAAFLLSAVLCEG) are cleaved as a signal peptide. Disulfide bonds link Cys-34/Cys-61 and Cys-36/Cys-77.

It belongs to the intercrine alpha (chemokine CxC) family. In terms of assembly, homodimer. Interacts with TNFAIP6 (via Link domain); this interaction interferes with chemokine binding to glycosaminoglycans.

Its subcellular location is the secreted. In terms of biological role, chemotactic factor that mediates inflammatory response by attracting neutrophils, basophils, and T-cells to clear pathogens and protect the host from infection. Also plays an important role in neutrophil activation. Released in response to an inflammatory stimulus, exerts its effect by binding to the G-protein-coupled receptors CXCR1 and CXCR2, primarily found in neutrophils, monocytes and endothelial cells. G-protein heterotrimer (alpha, beta, gamma subunits) constitutively binds to CXCR1/CXCR2 receptor and activation by IL8 leads to beta and gamma subunits release from Galpha (GNAI2 in neutrophils) and activation of several downstream signaling pathways including PI3K and MAPK pathways. The sequence is that of Interleukin-8 (CXCL8) from Cavia porcellus (Guinea pig).